A 554-amino-acid chain; its full sequence is Eukaryotic translation initiation factor 3 subunit D-2 (554 aa).

Residues 291–305 (QFDLLTVNETALEPP) form an RNA gate region. Residues 530–554 (NAFDSDGNEDEETSEDRPFLKSMAN) form a disordered region.

The protein belongs to the eIF-3 subunit D family. In terms of assembly, component of the eukaryotic translation initiation factor 3 (eIF-3) complex. The eIF-3 complex interacts with pix.

The protein localises to the cytoplasm. In terms of biological role, mRNA cap-binding component of the eukaryotic translation initiation factor 3 (eIF-3) complex, which is involved in protein synthesis of a specialized repertoire of mRNAs and, together with other initiation factors, stimulates binding of mRNA and methionyl-tRNAi to the 40S ribosome. The eIF-3 complex specifically targets and initiates translation of a subset of mRNAs involved in cell proliferation. In the eIF-3 complex, eif3d specifically recognizes and binds the 7-methylguanosine cap of a subset of mRNAs. The chain is Eukaryotic translation initiation factor 3 subunit D-2 from Drosophila mojavensis (Fruit fly).